We begin with the raw amino-acid sequence, 430 residues long: tRNA(Ile)-lysidine synthase (430 aa).

24–29 (SGGLDS) contributes to the ATP binding site.

The protein belongs to the tRNA(Ile)-lysidine synthase family.

It is found in the cytoplasm. The enzyme catalyses cytidine(34) in tRNA(Ile2) + L-lysine + ATP = lysidine(34) in tRNA(Ile2) + AMP + diphosphate + H(+). Functionally, ligates lysine onto the cytidine present at position 34 of the AUA codon-specific tRNA(Ile) that contains the anticodon CAU, in an ATP-dependent manner. Cytidine is converted to lysidine, thus changing the amino acid specificity of the tRNA from methionine to isoleucine. This Haemophilus influenzae (strain PittEE) protein is tRNA(Ile)-lysidine synthase.